We begin with the raw amino-acid sequence, 245 residues long: Complement C1q subcomponent subunit A (245 aa).

Residues 1 to 22 form the signal peptide; the sequence is MEGPRGWLVLCVLAISLASMVT. The span at 27–38 shows a compositional bias: basic and acidic residues; sequence RAPDGKKGEAGR. A disordered region spans residues 27–114; sequence RAPDGKKGEA…SPGNIKDQPR (88 aa). Residues 31 to 109 form the Collagen-like domain; the sequence is GKKGEAGRPG…KGTKGSPGNI (79 aa). Lysine 33 carries the 5-hydroxylysine modification. Lysine 33 carries O-linked (Gal...) hydroxylysine glycosylation. 2 positions are modified to 4-hydroxyproline: proline 39 and proline 45. Lysine 48 is subject to 5-hydroxylysine. The O-linked (Gal...) hydroxylysine glycan is linked to lysine 48. Residues proline 54 and proline 57 each carry the 4-hydroxyproline modification. A 5-hydroxylysine modification is found at lysine 67. Lysine 67 carries O-linked (Gal...) hydroxylysine glycosylation. 4-hydroxyproline is present on residues proline 73, proline 79, and proline 85. Residue lysine 100 is modified to 5-hydroxylysine. Lysine 100 is a glycosylation site (O-linked (Gal...) hydroxylysine). In terms of domain architecture, C1q spans 110–245; the sequence is KDQPRPAFSA…FSGFLIFPSA (136 aa). N-linked (GlcNAc...) asparagine glycosylation occurs at asparagine 146. Residues cysteine 172 and cysteine 190 are joined by a disulfide bond. Position 199 (glutamine 199) interacts with Ca(2+).

In terms of assembly, core component of the complement C1 complex, a calcium-dependent complex composed of 1 molecule of the C1Q subcomplex, 2 molecules of C1R and 2 molecules of C1S. The C1Q subcomplex is composed 18 subunits: 3 chains of C1QA, C1QB, and C1QC trimerize to form 6 collagen-like triple helices connected to six globular ligand-recognition modules (C1q domain). Interacts with CR1 (via Sushi 24 and Sushi 25 domains). Interacts (via C-terminus) with CD33; this interaction activates CD33 inhibitory motifs. As to quaternary structure, (Microbial infection) Interacts with Staphylococcus aureus protein Cna; this interaction results in the inhibition of the classical complement pathway. O-linked glycans are assumed to be the Glc-Gal disaccharides typically found as secondary modifications of hydroxylated lysines in collagen-like domains.

The protein localises to the secreted. It localises to the cell surface. With respect to regulation, the C1Q subcomplex is inhibited by sulfated molecules, such as triterpenoid sulfates, heparan sulfate, or chondroitin sulfates. In terms of biological role, core component of the complement C1 complex, a multiprotein complex that initiates the classical pathway of the complement system, a cascade of proteins that leads to phagocytosis and breakdown of pathogens and signaling that strengthens the adaptive immune system. The classical complement pathway is initiated by the C1Q subcomplex of the C1 complex, which specifically binds IgG or IgM immunoglobulins complexed with antigens, forming antigen-antibody complexes on the surface of pathogens: C1QA, together with C1QB and C1QC, specifically recognizes and binds the Fc regions of IgG or IgM via its C1q domain. Immunoglobulin-binding activates the proenzyme C1R, which cleaves C1S, initiating the proteolytic cascade of the complement system. The C1Q subcomplex is activated by a hexamer of IgG complexed with antigens, while it is activated by a pentameric IgM. The C1Q subcomplex also recognizes and binds phosphatidylserine exposed on the surface of cells undergoing programmed cell death, possibly promoting activation of the complement system. This chain is Complement C1q subcomponent subunit A, found in Homo sapiens (Human).